We begin with the raw amino-acid sequence, 246 residues long: Phosphomannomutase 2 (246 aa).

At alanine 2 the chain carries N-acetylalanine. The Nucleophile role is filled by aspartate 12. Aspartate 12 and aspartate 14 together coordinate Mg(2+). The Proton donor/acceptor role is filled by aspartate 14. The alpha-D-mannose 1-phosphate site is built by arginine 21, arginine 123, arginine 134, arginine 141, serine 179, and aspartate 181. 4 residues coordinate Mg(2+): aspartate 209, phenylalanine 221, aspartate 223, and threonine 226.

The protein belongs to the eukaryotic PMM family. As to quaternary structure, homodimer.

It localises to the cytoplasm. The enzyme catalyses alpha-D-mannose 1-phosphate = D-mannose 6-phosphate. The protein operates within nucleotide-sugar biosynthesis; GDP-alpha-D-mannose biosynthesis; alpha-D-mannose 1-phosphate from D-fructose 6-phosphate: step 2/2. In terms of biological role, involved in the synthesis of the GDP-mannose and dolichol-phosphate-mannose required for a number of critical mannosyl transfer reactions. The polypeptide is Phosphomannomutase 2 (PMM2) (Bos taurus (Bovine)).